We begin with the raw amino-acid sequence, 394 residues long: Actin-related protein 2 (394 aa).

ATP is bound by residues 160–162 (GDG), 214–218 (RMIKE), and 305–310 (GGSTMY).

The protein belongs to the actin family. ARP2 subfamily. Component of the Arp2/3 complex composed of ACTR2/ARP2, ACTR3/ARP3, ARPC1B/p41-ARC, ARPC2/p34-ARC, ARPC3/p21-ARC, ARPC4/p20-ARC and ARPC5/p16-ARC.

The protein resides in the cytoplasm. The protein localises to the cytoskeleton. It is found in the cell projection. Its subcellular location is the nucleus. Functionally, ATP-binding component of the Arp2/3 complex, a multiprotein complex that mediates actin polymerization upon stimulation by nucleation-promoting factor (NPF). The Arp2/3 complex mediates the formation of branched actin networks in the cytoplasm, providing the force for cell motility. Seems to contact the pointed end of the daughter actin filament. In addition to its role in the cytoplasmic cytoskeleton, the Arp2/3 complex also promotes actin polymerization in the nucleus, thereby regulating gene transcription and repair of damaged DNA. The Arp2/3 complex promotes homologous recombination (HR) repair in response to DNA damage by promoting nuclear actin polymerization, leading to drive motility of double-strand breaks (DSBs). This is Actin-related protein 2 (ACTR2) from Gallus gallus (Chicken).